Here is a 564-residue protein sequence, read N- to C-terminus: Efflux pump hmp6 (564 aa).

Over residues 1–25 (MEKHAEPEKSLGDKEFQEKELHEKP) the composition is skewed to basic and acidic residues. The disordered stretch occupies residues 1 to 46 (MEKHAEPEKSLGDKEFQEKELHEKPAPAASEDISGDSSVNKEDGPD). Transmembrane regions (helical) follow at residues 58–78 (LAVV…DTTI), 96–118 (VGWY…GKLY), 125–145 (IVFT…GVAP), 156–176 (IAGL…IHSV), 186–206 (GMIV…GGAF), 214–234 (WCFY…LFFF), 259–279 (FGTF…QMGG), and 289–309 (IIVL…VQFF). N-linked (GlcNAc...) asparagine glycans are attached at residues N312 and N322. 4 helical membrane-spanning segments follow: residues 330–350 (IYMF…PIWF), 361–383 (SGIR…GALV), 395–415 (ASVV…VDAS), and 452–472 (IGTA…VSAA).

The protein belongs to the major facilitator superfamily. TCR/Tet family.

It localises to the cell membrane. In terms of biological role, efflux pump that might be required for efficient secretion of hypothemycin or other secondary metabolies produced by the hypothemycin gene cluster. In Hypomyces subiculosus (Nectria subiculosa), this protein is Efflux pump hmp6.